A 702-amino-acid polypeptide reads, in one-letter code: MA3 DOMAIN-CONTAINING TRANSLATION REGULATORY FACTOR 1 (702 aa).

Positions 39–66 (LNIKSPTGGKGPVAGIPNRHVRRTHSGK) are disordered. Basic residues predominate over residues 57–66 (RHVRRTHSGK). The region spanning 122–243 (DYKKSVVSII…PPVFLVRSKK (122 aa)) is the MI 1 domain. The short motif at 273 to 280 (EKKWGGST) is the Nuclear localization signal 1 element. MI domains lie at 286–407 (ETKK…TSDQ), 420–541 (QYKK…DIST), and 583–702 (DAKD…SATQ). The short motif at 458-465 (LKRLITLA) is the Nuclear localization signal 2 element.

Belongs to the PDCD4 family. Binds to EIF4A1, S6K1 and S6K2. The association with ribosomes is modulated by cellular energy status and TOR activity. Phosphorylation by S6 kinases (e.g. S6K1 and S6K2) is modulated by cellular energy status and TOR activity. As to expression, mostly expressed in vegetative tissues, such as leaves, roots and stems, and, to a lower extent, in reproductive tissues, such as flower buds and flowers.

The protein localises to the nucleus. It localises to the cytoplasm. It is found in the cytosol. Functionally, involved in target of rapamycin (TOR)-regulated translation control, especially under energy-deficient conditions. The polypeptide is MA3 DOMAIN-CONTAINING TRANSLATION REGULATORY FACTOR 1 (Arabidopsis thaliana (Mouse-ear cress)).